The sequence spans 395 residues: NKAP-like protein (395 aa).

Disordered stretches follow at residues 1-77 and 91-247; these read MSPV…RPLP and CGGY…ISCK. Phosphoserine occurs at positions 23 and 25. The segment covering 25–35 has biased composition (polar residues); that stretch reads SPPSALQTSRS. Residues 109-130 are compositionally biased toward basic and acidic residues; that stretch reads DQEKEKEESYRQRRLKERERIG. Ser-149 carries the phosphoserine modification. Basic and acidic residues predominate over residues 150 to 161; it reads DEHTPAEDEVKN. 2 stretches are compositionally biased toward basic residues: residues 177-197 and 214-238; these read KTSHSTKKKRKKKPSKRKHKK and KKVKTKKKEKKKKHRAKQLKKKRTK.

Belongs to the NKAP family. Interacts with RBPJ, CIR1 and HDAC3. In terms of tissue distribution, specific to testis (at protein level). Detected in differenting spermatogonia and early spermatocytes (at protein level).

The protein resides in the nucleus. Transcriptional repressor of Notch-mediated signaling. Required for spermatogenesis. This is NKAP-like protein from Mus musculus (Mouse).